Consider the following 446-residue polypeptide: Phosphoglucosamine mutase (446 aa).

Catalysis depends on Ser88, which acts as the Phosphoserine intermediate. The Mg(2+) site is built by Ser88, Asp231, Asp233, and Asp235. At Ser88 the chain carries Phosphoserine.

The protein belongs to the phosphohexose mutase family. It depends on Mg(2+) as a cofactor. Post-translationally, activated by phosphorylation.

The enzyme catalyses alpha-D-glucosamine 1-phosphate = D-glucosamine 6-phosphate. Functionally, catalyzes the conversion of glucosamine-6-phosphate to glucosamine-1-phosphate. This is Phosphoglucosamine mutase from Methanococcus vannielii (strain ATCC 35089 / DSM 1224 / JCM 13029 / OCM 148 / SB).